The chain runs to 61 residues: Photosystem II reaction center protein K (61 aa).

Residues 1–24 (MLNIFSLICICINSALHSSSFFFA) constitute a propeptide that is removed on maturation. A helical transmembrane segment spans residues 40–60 (MPVIPVLFFLLALVWQAAVSF).

It belongs to the PsbK family. PSII is composed of 1 copy each of membrane proteins PsbA, PsbB, PsbC, PsbD, PsbE, PsbF, PsbH, PsbI, PsbJ, PsbK, PsbL, PsbM, PsbT, PsbX, PsbY, PsbZ, Psb30/Ycf12, at least 3 peripheral proteins of the oxygen-evolving complex and a large number of cofactors. It forms dimeric complexes.

The protein resides in the plastid. It is found in the chloroplast thylakoid membrane. Its function is as follows. One of the components of the core complex of photosystem II (PSII). PSII is a light-driven water:plastoquinone oxidoreductase that uses light energy to abstract electrons from H(2)O, generating O(2) and a proton gradient subsequently used for ATP formation. It consists of a core antenna complex that captures photons, and an electron transfer chain that converts photonic excitation into a charge separation. The protein is Photosystem II reaction center protein K of Liriodendron tulipifera (Tuliptree).